The chain runs to 123 residues: Holo-[acyl-carrier-protein] synthase (123 aa).

Residues Asp9 and Glu57 each coordinate Mg(2+).

Belongs to the P-Pant transferase superfamily. AcpS family. It depends on Mg(2+) as a cofactor.

The protein resides in the cytoplasm. The enzyme catalyses apo-[ACP] + CoA = holo-[ACP] + adenosine 3',5'-bisphosphate + H(+). In terms of biological role, transfers the 4'-phosphopantetheine moiety from coenzyme A to a Ser of acyl-carrier-protein. This Streptomyces coelicolor (strain ATCC BAA-471 / A3(2) / M145) protein is Holo-[acyl-carrier-protein] synthase.